The sequence spans 197 residues: Large ribosomal subunit protein uL18 (197 aa).

This sequence belongs to the universal ribosomal protein uL18 family. Part of the 50S ribosomal subunit. Contacts the 5S and 23S rRNAs.

Its function is as follows. This is one of the proteins that bind and probably mediate the attachment of the 5S RNA into the large ribosomal subunit, where it forms part of the central protuberance. In Sulfolobus acidocaldarius (strain ATCC 33909 / DSM 639 / JCM 8929 / NBRC 15157 / NCIMB 11770), this protein is Large ribosomal subunit protein uL18.